Consider the following 116-residue polypeptide: UPF0342 protein RBAM_010030 (116 aa).

Belongs to the UPF0342 family.

The chain is UPF0342 protein RBAM_010030 from Bacillus velezensis (strain DSM 23117 / BGSC 10A6 / LMG 26770 / FZB42) (Bacillus amyloliquefaciens subsp. plantarum).